The chain runs to 357 residues: Dihydroflavonol 4-reductase (357 aa).

NADP(+) is bound by residues lysine 49 and tyrosine 168.

It belongs to the NAD(P)-dependent epimerase/dehydratase family. Dihydroflavonol-4-reductase subfamily.

The catalysed reaction is a (2R,3S,4S)-leucoanthocyanidin + NADP(+) = a (2R,3R)-dihydroflavonol + NADPH + H(+). The enzyme catalyses (2S)-flavan-4-ol + NADP(+) = (2S)-flavanone + NADPH + H(+). The protein operates within pigment biosynthesis; anthocyanin biosynthesis. In terms of biological role, bifunctional enzyme involved in flavonoid metabolism. The sequence is that of Dihydroflavonol 4-reductase (A1) from Zea mays (Maize).